We begin with the raw amino-acid sequence, 596 residues long: Transcription factor IIIB 70 kDa subunit (596 aa).

The TFIIB-type zinc-finger motif lies at 1–33 (MPVCKNCHGTEFERDLSNANNDLVCKACGVVSE). Zn(2+)-binding residues include Cys-4, Cys-7, Cys-25, and Cys-28. Tandem repeats lie at residues 90–166 (VSYA…KMVK) and 185–264 (FAEK…EFKN). 2 disordered regions span residues 363-421 (GENI…NESG) and 509-534 (IATG…EPTK). A compositionally biased stretch (basic and acidic residues) spans 365-375 (NIYHEGSENET). Phosphoserine occurs at positions 381 and 384. A compositionally biased stretch (basic and acidic residues) spans 388–421 (EHVEGEDKETEGTEEKVKKVKTKTSEEKKENESG). Residues 516-526 (VKKKRTRRRNN) are compositionally biased toward basic residues.

This sequence belongs to the TFIIB family. TFIIIB comprises the TATA-binding protein (TBP), the B-related factor (BRF) and the B' component (TFC5).

It localises to the nucleus. In terms of biological role, general activator of RNA polymerase III transcription. Interacts with TBP. Binds to Pol III subunit C34 and to the TAU135 component of TFIIIC. The polypeptide is Transcription factor IIIB 70 kDa subunit (BRF1) (Saccharomyces cerevisiae (strain ATCC 204508 / S288c) (Baker's yeast)).